The primary structure comprises 443 residues: Histidine--tRNA ligase (443 aa).

A compositionally biased stretch (basic and acidic residues) spans 1 to 20 (MTESEKKQQKPQKAKAEKFK). Residues 1–21 (MTESEKKQQKPQKAKAEKFKA) are disordered.

It belongs to the class-II aminoacyl-tRNA synthetase family. Homodimer.

The protein localises to the cytoplasm. It catalyses the reaction tRNA(His) + L-histidine + ATP = L-histidyl-tRNA(His) + AMP + diphosphate + H(+). This is Histidine--tRNA ligase from Corynebacterium jeikeium (strain K411).